A 198-amino-acid chain; its full sequence is Recombination protein RecR (198 aa).

The segment at Cys-58 to Cys-73 adopts a C4-type zinc-finger fold. Residues Lys-81 to Pro-175 form the Toprim domain.

It belongs to the RecR family.

In terms of biological role, may play a role in DNA repair. It seems to be involved in an RecBC-independent recombinational process of DNA repair. It may act with RecF and RecO. The chain is Recombination protein RecR from Lachnoclostridium phytofermentans (strain ATCC 700394 / DSM 18823 / ISDg) (Clostridium phytofermentans).